The following is a 122-amino-acid chain: uncharacterized protein (122 aa).

Helical transmembrane passes span 34-54 and 91-111; these read IIFLTVGLLLFIAALALGVLV and FVLAAFGFVCMVASFLYFVSF.

The protein localises to the cell membrane. This is an uncharacterized protein from Mycoplasma pneumoniae (strain ATCC 29342 / M129 / Subtype 1) (Mycoplasmoides pneumoniae).